The following is a 322-amino-acid chain: tRNA uridine(34) hydroxylase (322 aa).

The Rhodanese domain maps to 125–219; sequence QQEDTIVVDA…YGKDPEVQGE (95 aa). The active-site Cysteine persulfide intermediate is Cys-179.

Belongs to the TrhO family.

The enzyme catalyses uridine(34) in tRNA + AH2 + O2 = 5-hydroxyuridine(34) in tRNA + A + H2O. In terms of biological role, catalyzes oxygen-dependent 5-hydroxyuridine (ho5U) modification at position 34 in tRNAs. This Bacillus licheniformis (strain ATCC 14580 / DSM 13 / JCM 2505 / CCUG 7422 / NBRC 12200 / NCIMB 9375 / NCTC 10341 / NRRL NRS-1264 / Gibson 46) protein is tRNA uridine(34) hydroxylase.